The following is a 109-amino-acid chain: uncharacterized protein (109 aa).

Residues 27–89 (KEEAHQFRDK…LKRIDELIAV (63 aa)) are a coiled coil.

This is an uncharacterized protein from Streptococcus pneumoniae.